The following is a 308-amino-acid chain: Ribonuclease HIII (308 aa).

The region spanning 88 to 304 (FHCIGSDEAG…RDKAIHLINQ (217 aa)) is the RNase H type-2 domain. A divalent metal cation is bound by residues aspartate 94, glutamate 95, and aspartate 199.

This sequence belongs to the RNase HII family. RnhC subfamily. Mn(2+) serves as cofactor. The cofactor is Mg(2+).

The protein localises to the cytoplasm. The enzyme catalyses Endonucleolytic cleavage to 5'-phosphomonoester.. Endonuclease that specifically degrades the RNA of RNA-DNA hybrids. The sequence is that of Ribonuclease HIII from Staphylococcus epidermidis (strain ATCC 35984 / DSM 28319 / BCRC 17069 / CCUG 31568 / BM 3577 / RP62A).